Here is a 390-residue protein sequence, read N- to C-terminus: 8-amino-7-oxononanoate synthase (390 aa).

A substrate-binding site is contributed by Arg20. 107–108 (GF) is a pyridoxal 5'-phosphate binding site. His132 lines the substrate pocket. Residues Ser179, 204 to 207 (DDAH), and 235 to 238 (TLSK) contribute to the pyridoxal 5'-phosphate site. N6-(pyridoxal phosphate)lysine is present on Lys238. Residue Thr352 participates in substrate binding.

It belongs to the class-II pyridoxal-phosphate-dependent aminotransferase family. BioF subfamily. In terms of assembly, homodimer. Pyridoxal 5'-phosphate is required as a cofactor.

It catalyses the reaction 6-carboxyhexanoyl-[ACP] + L-alanine + H(+) = (8S)-8-amino-7-oxononanoate + holo-[ACP] + CO2. It functions in the pathway cofactor biosynthesis; biotin biosynthesis. Functionally, catalyzes the decarboxylative condensation of pimeloyl-[acyl-carrier protein] and L-alanine to produce 8-amino-7-oxononanoate (AON), [acyl-carrier protein], and carbon dioxide. This is 8-amino-7-oxononanoate synthase from Exiguobacterium sibiricum (strain DSM 17290 / CCUG 55495 / CIP 109462 / JCM 13490 / 255-15).